We begin with the raw amino-acid sequence, 560 residues long: Membrane protein insertase YidC (560 aa).

6 helical membrane-spanning segments follow: residues 5–25 (IINL…WQYF), 334–354 (AIDF…MNFF), 357–377 (YVGN…LLMF), 431–451 (LPIL…YVTI), 476–496 (LFGL…WPIL), and 522–542 (FMPL…LIYW).

Belongs to the OXA1/ALB3/YidC family. Type 1 subfamily. As to quaternary structure, interacts with the Sec translocase complex via SecD. Specifically interacts with transmembrane segments of nascent integral membrane proteins during membrane integration.

It is found in the cell inner membrane. Its function is as follows. Required for the insertion and/or proper folding and/or complex formation of integral membrane proteins into the membrane. Involved in integration of membrane proteins that insert both dependently and independently of the Sec translocase complex, as well as at least some lipoproteins. Aids folding of multispanning membrane proteins. The sequence is that of Membrane protein insertase YidC from Rickettsia africae (strain ESF-5).